The following is a 121-amino-acid chain: Histone H2B (121 aa).

The segment at 1–27 is disordered; it reads MAPKKAPAAAEKKVKKAPTTEKKNKKK. Alanine 2 carries the n,N,N-trimethylalanine modification. N6-acetyllysine is present on residues lysine 5 and lysine 41. A Glycyl lysine isopeptide (Lys-Gly) (interchain with G-Cter in ubiquitin) cross-link involves residue lysine 115.

This sequence belongs to the histone H2B family. As to quaternary structure, the nucleosome is a histone octamer containing two molecules each of H2A, H2B, H3 and H4 assembled in one H3-H4 heterotetramer and two H2A-H2B heterodimers. The octamer wraps approximately 147 bp of DNA. In terms of processing, monoubiquitination of Lys-115 gives a specific tag for epigenetic transcriptional activation and is also prerequisite for histone H3 'Lys-4' and 'Lys-79' methylation. Acetylation occurs almost exclusively in the MAC.

The protein localises to the nucleus. Its subcellular location is the chromosome. Its function is as follows. Core component of nucleosome. Nucleosomes wrap and compact DNA into chromatin, limiting DNA accessibility to the cellular machineries which require DNA as a template. Histones thereby play a central role in transcription regulation, DNA repair, DNA replication and chromosomal stability. DNA accessibility is regulated via a complex set of post-translational modifications of histones, also called histone code, and nucleosome remodeling. The sequence is that of Histone H2B from Tetrahymena pyriformis.